Reading from the N-terminus, the 534-residue chain is Importin subunit alpha-1b (534 aa).

An IBB domain is found at 1 to 58 (MSLRPSERAEVRRSRYKVAVDADEGRRRREDNMVEIRKSRREESLLKKRRDGLPAAAA). 8 ARM repeats span residues 111–151 (SPPI…NIAS), 154–193 (SDNTKVVVESGAVPIFVKLLSSPSEDVREQAVWALGNVAG), 196–236 (PKCR…NFCR), 238–277 (KPQPNFEQVKPALSALQRLIHSQDEEVLTDACWALSYLSD), 280–319 (NDKIQAVIESGVFPRLVELLMHPSASVLIPALRTVGNIVT), 322–362 (DMQT…NITA), 365–404 (REQIQAVINANIIAPLVHLLQTAEFDIKKEAAWAISNATS), and 408–447 (HDQIKYLVAQGCIKPLCDLLVCPDPRIVTVCLEGLENILK). A disordered region spans residues 505 to 534 (DAMPSGDNAQNGFNFGNQQPNVPSGGFNFG). The segment covering 514-523 (QNGFNFGNQQ) has biased composition (low complexity).

Belongs to the importin alpha family. As to quaternary structure, forms a complex with importin subunit beta-1. The whole complex, most stable and composed of importin alpha and importin beta, is referred to as PTAC or pore targeting complex. In terms of tissue distribution, highly expressed in root and weakly in callus, etiolated leaf and green leaf.

It localises to the cytoplasm. The protein resides in the perinuclear region. Its function is as follows. Functions in nuclear protein import. Binds specifically and directly to substrates containing either a simple or bipartite NLS motif. Promotes docking of import substrates to the nuclear envelope. In conjunction with importin beta-1, mediates the nuclear envelope docking, and the subsequent translocation into the nucleus of the constitutive morphogenetic 1 (COP1) protein containing bipartite NLS motif. In Oryza sativa subsp. japonica (Rice), this protein is Importin subunit alpha-1b.